The sequence spans 168 residues: Cysteine-rich perinuclear theca protein 1 (168 aa).

The tract at residues 144 to 168 (NVSDPEEVPPCLDSDPFPNGDLASS) is disordered.

Specifically expressed in spermatozoa (at protein level). Detected from the elongated spermatid stage onwards; not found in immature germ cells or somatic cells (at protein level).

Its subcellular location is the cytoplasm. It is found in the cytoskeleton. The protein resides in the perinuclear theca. This is Cysteine-rich perinuclear theca protein 1 from Mus musculus (Mouse).